Reading from the N-terminus, the 961-residue chain is Aconitate hydratase A (961 aa).

Residues Cys499, Cys565, and Cys568 each coordinate [4Fe-4S] cluster.

It belongs to the aconitase/IPM isomerase family. In terms of assembly, monomer. The cofactor is [4Fe-4S] cluster.

It catalyses the reaction citrate = D-threo-isocitrate. The catalysed reaction is (2S,3R)-3-hydroxybutane-1,2,3-tricarboxylate = 2-methyl-cis-aconitate + H2O. It participates in carbohydrate metabolism; tricarboxylic acid cycle; isocitrate from oxaloacetate: step 2/2. Its pathway is organic acid metabolism; propanoate degradation. Involved in the catabolism of short chain fatty acids (SCFA) via the tricarboxylic acid (TCA)(acetyl degradation route) and probably via the 2-methylcitrate cycle I (propionate degradation route). Catalyzes the reversible isomerization of citrate to isocitrate via cis-aconitate. The apo form of AcnA functions as a RNA-binding regulatory protein. Could catalyze the hydration of 2-methyl-cis-aconitate to yield (2R,3S)-2-methylisocitrate. The polypeptide is Aconitate hydratase A (acn) (Mycobacterium avium).